A 185-amino-acid chain; its full sequence is NEDD8-conjugating enzyme UBE2F (185 aa).

An interaction with UBA3 region spans residues 1–29 (MLTLASKLKRDDGVRGPRASNPASDSTRR). The disordered stretch occupies residues 11 to 30 (DDGVRGPRASNPASDSTRRV). One can recognise a UBC core domain in the interval 32–185 (VRDKLLVKEV…VEDYIKRYAR (154 aa)). Cys-116 serves as the catalytic Glycyl thioester intermediate.

It belongs to the ubiquitin-conjugating enzyme family. UBE2F subfamily.

The catalysed reaction is [E1 NEDD8-activating enzyme]-S-[NEDD8 protein]-yl-L-cysteine + [E2 NEDD8-conjugating enzyme]-L-cysteine = [E1 NEDD8-activating enzyme]-L-cysteine + [E2 NEDD8-conjugating enzyme]-S-[NEDD8-protein]-yl-L-cysteine.. It functions in the pathway protein modification; protein neddylation. Accepts the ubiquitin-like protein NEDD8 from the UBA3-NAE1 E1 complex and catalyzes its covalent attachment to other proteins. Together with the E3 ubiquitin ligase RNF7/RBX2, specifically neddylates cullin-5 (CUL5). Does not neddylate CUL1, CUL2, CUL3, CUL4A or CUL4B. The sequence is that of NEDD8-conjugating enzyme UBE2F (UBE2F) from Gallus gallus (Chicken).